The chain runs to 663 residues: Protein associated with UVRAG as autophagy enhancer (663 aa).

Disordered regions lie at residues 1 to 36 (MVSQ…LDTE) and 65 to 136 (DASP…EERA). Composition is skewed to polar residues over residues 80–93 (TASN…TSPL) and 105–130 (PKGT…SSVT). An interaction with UVRAG region spans residues 196-235 (EAFVLPVDAEKENAHFYVADMIISVMEKMKCNILSQQHTE). Residues K484, K534, K574, and K634 each carry the N6-acetyllysine modification.

In terms of assembly, interacts with UVRAG; the interaction is direct and promotes association with the PI3K/PI3KC3 and HOPS complexes. Interacts with STX17. Acetylated by KAT5/TIP60 under autophagy induction, promoting autophagosome maturation and lipid metabolism. Lys-484 and Lys-574 constitute the key sites for tuning function in autophagy.

It is found in the cytoplasmic vesicle. The protein localises to the autophagosome membrane. In terms of biological role, regulator of autophagy that promotes autophagosome maturation by facilitating the biogenesis of phosphatidylinositol 3-phosphate (PtdIns(3)P) in late steps of autophagy. Acts by antagonizing RUBCN, thereby stimulating phosphatidylinositol 3-kinase activity of the PI3K/PI3KC3 complex. Following anchorage to the autophagosomal SNARE STX17, promotes the recruitment of PI3K/PI3KC3 and HOPS complexes to the autophagosome to regulate the fusion specificity of autophagosomes with late endosomes/lysosomes. Binds phosphoinositides phosphatidylinositol 3-phosphate (PtdIns(3)P), 4-phosphate (PtdIns(4)P) and 5-phosphate (PtdIns(5)P). In addition to its role in autophagy, acts as a regulator of lipid and glycogen homeostasis. May act as a tumor suppressor. The sequence is that of Protein associated with UVRAG as autophagy enhancer from Bos taurus (Bovine).